The following is a 245-amino-acid chain: MIIPALDLIEGQVVRLFQGDYGQVTEYKVDPAEQFNLYHQAGANWLHLVDLTGAKDTTARQLDLIARLLASTPANIQIGGGVRNEADVQDLLNAGAQRVVVGSTAVKQPELVKGWMEKYGAEKIVLALDINIDENGTRNVAISGWQEDSGVTIEALLEDYLTVGLKHVLCTDISRDGTLQGSNVELYVDLCKQYPQVQFQSSGGIGSLDDIAALKGSGVAGVIVGRALLDGKFTAEEAFQCWQSE.

Aspartate 7 (proton acceptor) is an active-site residue. Catalysis depends on aspartate 129, which acts as the Proton donor.

The protein belongs to the HisA/HisF family.

The protein resides in the cytoplasm. The catalysed reaction is 1-(5-phospho-beta-D-ribosyl)-5-[(5-phospho-beta-D-ribosylamino)methylideneamino]imidazole-4-carboxamide = 5-[(5-phospho-1-deoxy-D-ribulos-1-ylimino)methylamino]-1-(5-phospho-beta-D-ribosyl)imidazole-4-carboxamide. It participates in amino-acid biosynthesis; L-histidine biosynthesis; L-histidine from 5-phospho-alpha-D-ribose 1-diphosphate: step 4/9. The sequence is that of 1-(5-phosphoribosyl)-5-[(5-phosphoribosylamino)methylideneamino] imidazole-4-carboxamide isomerase from Aliivibrio fischeri (strain MJ11) (Vibrio fischeri).